A 149-amino-acid polypeptide reads, in one-letter code: MSFRFGQHLIKPSVVFLKTELSFALVNRKPVVPGHVLVCPLRPVERFRDMSPEEVADLFQAAQRVGTVVEKHFQGTSLTFSMQDGPEAGQTVKHVHVHILPRKAGDFHRNDSIYDALEKHDREDKDSPALWRSEEEMAAEAAALRVYFQ.

Residues 2-109 enclose the HIT domain; sequence SFRFGQHLIK…LPRKAGDFHR (108 aa). Residues histidine 8, asparagine 27, glutamine 83, and 89–92 contribute to the substrate site; that span reads GQTV. Residues 94-98 carry the Histidine triad motif motif; the sequence is HVHVH. Histidine 96 serves as the catalytic Tele-AMP-histidine intermediate. Histidine 98 provides a ligand contact to substrate. Phosphotyrosine occurs at positions 114 and 147.

Homodimer. Interacts with UBE2I. Interacts with MDM2. Interacts with CTNNB1. Identified in a complex with CTNNB1 and LEF1. Post-translationally, phosphorylation at Tyr-114 by SRC is required for induction of apoptosis. Expressed in the brain, kidney, spleen, testis and lung.

Its subcellular location is the cytoplasm. The protein resides in the nucleus. It localises to the mitochondrion. The enzyme catalyses P(1),P(3)-bis(5'-adenosyl) triphosphate + H2O = AMP + ADP + 2 H(+). The catalysed reaction is adenosine 5'-phosphosulfate + H2O = sulfate + AMP + 2 H(+). It catalyses the reaction adenosine 5'-phosphosulfate + NH4(+) = adenosine 5'-phosphoramidate + sulfate + 2 H(+). It carries out the reaction adenosine 5'-phosphoramidate + H2O = AMP + NH4(+). Functionally, possesses dinucleoside triphosphate hydrolase activity. Cleaves P(1)-P(3)-bis(5'-adenosyl) triphosphate (Ap3A) to yield AMP and ADP. Can also hydrolyze P(1)-P(4)-bis(5'-adenosyl) tetraphosphate (Ap4A), but has extremely low activity with ATP. Exhibits adenylylsulfatase activity, hydrolyzing adenosine 5'-phosphosulfate to yield AMP and sulfate. Exhibits adenosine 5'-monophosphoramidase activity, hydrolyzing purine nucleotide phosphoramidates with a single phosphate group such as adenosine 5'monophosphoramidate (AMP-NH2) to yield AMP and NH2. Exhibits adenylylsulfate-ammonia adenylyltransferase, catalyzing the ammonolysis of adenosine 5'-phosphosulfate resulting in the formation of adenosine 5'-phosphoramidate. Also catalyzes the ammonolysis of adenosine 5-phosphorofluoridate and diadenosine triphosphate. Modulates transcriptional activation by CTNNB1 and thereby contributes to regulate the expression of genes essential for cell proliferation and survival, such as CCND1 and BIRC5. Plays a role in the induction of apoptosis via SRC and AKT1 signaling pathways. Inhibits MDM2-mediated proteasomal degradation of p53/TP53 and thereby plays a role in p53/TP53-mediated apoptosis. Induction of apoptosis depends on the ability of FHIT to bind P(1)-P(3)-bis(5'-adenosyl) triphosphate or related compounds, but does not require its catalytic activity Functions as a tumor suppressor. This is Bis(5'-adenosyl)-triphosphatase (FHIT) from Bos taurus (Bovine).